A 475-amino-acid chain; its full sequence is Glutamyl-tRNA(Gln) amidotransferase subunit A (475 aa).

Residues K69 and S144 each act as charge relay system in the active site. The active-site Acyl-ester intermediate is S168.

This sequence belongs to the amidase family. GatA subfamily. As to quaternary structure, heterotrimer of A, B and C subunits.

It catalyses the reaction L-glutamyl-tRNA(Gln) + L-glutamine + ATP + H2O = L-glutaminyl-tRNA(Gln) + L-glutamate + ADP + phosphate + H(+). Its function is as follows. Allows the formation of correctly charged Gln-tRNA(Gln) through the transamidation of misacylated Glu-tRNA(Gln) in organisms which lack glutaminyl-tRNA synthetase. The reaction takes place in the presence of glutamine and ATP through an activated gamma-phospho-Glu-tRNA(Gln). The polypeptide is Glutamyl-tRNA(Gln) amidotransferase subunit A (Methanococcoides burtonii (strain DSM 6242 / NBRC 107633 / OCM 468 / ACE-M)).